The following is a 169-amino-acid chain: Crossover junction endodeoxyribonuclease RuvC (169 aa).

Catalysis depends on residues Asp-12, Glu-72, and Asp-144. The Mg(2+) site is built by Asp-12, Glu-72, and Asp-144.

It belongs to the RuvC family. As to quaternary structure, homodimer which binds Holliday junction (HJ) DNA. The HJ becomes 2-fold symmetrical on binding to RuvC with unstacked arms; it has a different conformation from HJ DNA in complex with RuvA. In the full resolvosome a probable DNA-RuvA(4)-RuvB(12)-RuvC(2) complex forms which resolves the HJ. Requires Mg(2+) as cofactor.

It is found in the cytoplasm. It catalyses the reaction Endonucleolytic cleavage at a junction such as a reciprocal single-stranded crossover between two homologous DNA duplexes (Holliday junction).. Functionally, the RuvA-RuvB-RuvC complex processes Holliday junction (HJ) DNA during genetic recombination and DNA repair. Endonuclease that resolves HJ intermediates. Cleaves cruciform DNA by making single-stranded nicks across the HJ at symmetrical positions within the homologous arms, yielding a 5'-phosphate and a 3'-hydroxyl group; requires a central core of homology in the junction. The consensus cleavage sequence is 5'-(A/T)TT(C/G)-3'. Cleavage occurs on the 3'-side of the TT dinucleotide at the point of strand exchange. HJ branch migration catalyzed by RuvA-RuvB allows RuvC to scan DNA until it finds its consensus sequence, where it cleaves and resolves the cruciform DNA. This is Crossover junction endodeoxyribonuclease RuvC from Azorhizobium caulinodans (strain ATCC 43989 / DSM 5975 / JCM 20966 / LMG 6465 / NBRC 14845 / NCIMB 13405 / ORS 571).